Here is a 570-residue protein sequence, read N- to C-terminus: MSCGNEFVETLKKIGYPKADILNGEDFDWLFEDVEDESFLKWFCGNVNEQNVLSEKELEAFSDLQRSGKPILEGTALDEVLRTCKTFDLKTCKLDDKEIQILEDEVQTLQKLNNSKIQRRNKYQLMVSETSYRFLALNAKQEEATKKLKQKQGFLNSVNTKLSNELQGLTEEVNNLMIFFRNSNLSERTNPMVFLSQFPLGKYISQEEQSTAALTLYTKKQFFQGMHEVVESSNEDNFQLLDIQTPSICDNEEILRERRLEMARLQMACICVQKQIIYLKTSNLSMKSSIKWAEENLNRLTNEVIDKENLDAEISSLNSEILKLEEQITHIKDKVLPAVVKEYAQLLNMPVVKGDFELQIAKQDYYTARQELVLNELIKQKASFELVQLSYEIELRKHWDTYRQLESLVQQLSQRNTVLCQHLAVLSDIPASEQLTSRTPIDTKDHSTHRLYELLEGDNKKKELFITHEHLEEVAEKLKQDVSVIQDQLAVSTQEHFFFLSKLNNDVDMLCDALYRGGNQLLLCDQELKEHFHQVESQLNELHHLLTDILADVKTKRRILATNKLHQVER.

An N-acetylserine modification is found at S2. Coiled coils occupy residues 90–124 (KTCKLDDKEIQILEDEVQTLQKLNNSKIQRRNKYQ), 154–178 (FLNSVNTKLSNELQGLTEEVNNLMI), 284–336 (LSMK…DKVL), and 458–495 (DNKKKELFITHEHLEEVAEKLKQDVSVIQDQLAVSTQE).

Belongs to the HAUS3 family. Component of the HAUS augmin-like complex. The complex interacts with the gamma-tubulin ring complex and this interaction is required for spindle assembly. Interacts with EML3 (phosphorylated at 'Thr-882').

It is found in the cytoplasm. Its subcellular location is the cytoskeleton. It localises to the microtubule organizing center. The protein localises to the centrosome. The protein resides in the spindle. Contributes to mitotic spindle assembly, maintenance of centrosome integrity and completion of cytokinesis as part of the HAUS augmin-like complex. The sequence is that of HAUS augmin-like complex subunit 3 (Haus3) from Mus musculus (Mouse).